A 402-amino-acid polypeptide reads, in one-letter code: Protein rds1 (402 aa).

Functionally, may have a function in stress-related responses of the cell. This Schizosaccharomyces pombe (strain 972 / ATCC 24843) (Fission yeast) protein is Protein rds1 (rds1).